A 293-amino-acid polypeptide reads, in one-letter code: MAGSLSEIKDKILSTEKTSKITSAMQMVSSAKLVKSEQAARDFQVYASKIRQITTNLLKSDLVSGSDNPMLASRPVKKTGYIVITSDKGLVGGYNSKILKAMMDTITDYHTENDDYAIISIGSVGSDFFKARGMNVSFELRGLEDQPSFDQVGKIIAQAVEMYKNELFDELYVCYNHHVNSLTSQVRMQQMLPIKELDADEASEDRVITGFELEPNREVILEQLLPQYTESLIYGAIIDAKTAEHAAGMTAMQTATDNAKNVINDLTIQYNRARQAAITQEITEIVAGANALE.

It belongs to the ATPase gamma chain family. As to quaternary structure, F-type ATPases have 2 components, CF(1) - the catalytic core - and CF(0) - the membrane proton channel. CF(1) has five subunits: alpha(3), beta(3), gamma(1), delta(1), epsilon(1). CF(0) has three main subunits: a, b and c.

It localises to the cell membrane. In terms of biological role, produces ATP from ADP in the presence of a proton gradient across the membrane. The gamma chain is believed to be important in regulating ATPase activity and the flow of protons through the CF(0) complex. The chain is ATP synthase gamma chain from Streptococcus agalactiae serotype III (strain NEM316).